We begin with the raw amino-acid sequence, 2196 residues long: Non-reducing polyketide synthase CTB1 (2196 aa).

Positions 11-250 (AFGDQTYDCS…TRLPITAPYH (240 aa)) are N-terminal acylcarrier protein transacylase domain (SAT). Residues 381 to 814 (KSPIAILAAS…GGNTCLVLED (434 aa)) form the Ketosynthase family 3 (KS3) domain. Residues Cys553, His688, and His733 each act as for beta-ketoacyl synthase activity in the active site. The tract at residues 922-1223 (AFTGQGSAFA…QTFASINKDK (302 aa)) is malonyl-CoA:ACP transacylase (MAT) domain. The product template (PT) domain stretch occupies residues 1298-1611 (SSSIHKVITN…VPKRLMHYIV (314 aa)). The tract at residues 1302-1441 (HKVITNTITA…EKTALKSAAL (140 aa)) is N-terminal hotdog fold. In terms of domain architecture, PKS/mFAS DH spans 1302–1608 (HKVITNTITA…LQGVPKRLMH (307 aa)). His1335 (proton acceptor; for dehydratase activity) is an active-site residue. The segment at 1460–1608 (TYRFSKGMIY…LQGVPKRLMH (149 aa)) is C-terminal hotdog fold. The active-site Proton donor; for dehydratase activity is the Asp1520. The interval 1617-1666 (KASGPPTEKKTSSPPVEKKASAPVAPTRPAIQRKNASIPPPATQVTPQNK) is disordered. Basic and acidic residues predominate over residues 1623–1636 (TEKKTSSPPVEKKA). 2 Carrier domains span residues 1671 to 1748 (PSVS…TRLS) and 1775 to 1857 (DPSP…SGST). Residues Ser1708 and Ser1816 each carry the O-(pantetheine 4'-phosphoryl)serine modification. Residues 1856–1867 (STESFDSTTTKP) are compositionally biased toward polar residues. The disordered stretch occupies residues 1856–1923 (STESFDSTTT…PPKGRIPPAW (68 aa)). Positions 1872-1887 (ATPPLTDSSASSPPSS) are enriched in low complexity. The tract at residues 1937 to 2187 (ILFLFPDGAG…SGAQMLVEHM (251 aa)) is thioesterase (TE) domain.

Requires pantetheine 4'-phosphate as cofactor.

The catalysed reaction is 6 malonyl-CoA + acetyl-CoA + 6 H(+) = nor-toralactone + 6 CO2 + 7 CoA + 2 H2O. It functions in the pathway mycotoxin biosynthesis. Polyketide synthase; part of the gene cluster that mediates the biosynthesis of cercosporin, a light-activated, non-host-selective toxin. The perylenequinone chromophore of cercosporin absorbs light energy to attain an electronically-activated triplet state and produces active oxygen species such as the hydroxyl radical, superoxide, hydrogen peroxide or singlet oxygen upon reaction with oxygen molecules. These reactive oxygen species cause damage to various cellular components including lipids, proteins and nucleic acids. The first step of cercosporin biosynthesis is performed by the polyketide synthase CTB1 which catalyzes the formation of nor-toralactone. The starter unit acyltransferase (SAT) domain of CTB1 initiates polyketide extension by the selective utilization of acetyl-CoA, which is elongated to the heptaketide in the beta-ketoacyl synthase (KS) domain by successive condensations with six malonyl units introduced by the malonyl acyltransferase (MAT) domain. The product template (PT) domain catalyzes C4-C9 and C2-C11 aldol cyclizations and dehydrations to a trihydroxynaphthalene, which is thought to be delivered to the thioesterase (TE) domain for product release. The bifunctional enzyme CTB3 then methylates nor-toralactone to toralactone before conducting an unusual oxidative aromatic ring opening. The O-methyltransferase CTB2 further methylates the nascent OH-6 of the CBT3 product, blocking further oxidation at this site before the reductase CTB6 reduces the 2-oxopropyl ketone at position C7, giving naphthalene. The FAD-dependent monooxygenase CTB5 in concert with the multicopper oxidase CTB12 are responsible for homodimerization of naphthalene with CTB7 installing the dioxepine moiety, finally producing cercosporin. The fasciclin domain-containing protein CTB11 might act with CTB5 and CTB12 whereas the roles of CTB9 and CTB10 have still to be elucidated. The protein is Non-reducing polyketide synthase CTB1 of Cercospora nicotianae (Barn spot disease fungus).